Consider the following 313-residue polypeptide: Testis-expressed protein 264 (313 aa).

Residues 1–6 (MSDLLL) lie on the Lumenal side of the membrane. A helical; Signal-anchor for type III membrane protein transmembrane segment spans residues 7–31 (LGLIGGLTLLLLLTLLAFAGYSGLL). The Cytoplasmic segment spans residues 32–313 (AGVEVSAGSP…EPTAPEKGKE (282 aa)). The tract at residues 193–313 (PEMKETEWKW…EPTAPEKGKE (121 aa)) is disordered. Positions 219 to 247 (DTMSDTSSVSLEVSPGSRETSAATLSPGA) are enriched in polar residues. Phosphoserine is present on residues Ser239 and Ser244. Residues 251 to 263 (GWDDGDTRSEHSY) are compositionally biased toward basic and acidic residues. Residues 264 to 273 (SESGASGSSF) show a composition bias toward low complexity. The LIR motif signature appears at 273-276 (FEEL).

As to quaternary structure, interacts (via the LIR motif) with ATG8 family proteins MAP1LC3A, MAP1LC3B, GABARAP and GABARAPL1. Interacts with VCP/p97; bridging VCP/p97 to covalent DNA-protein cross-links (DPCs). Interacts with TOP1 (when sumoylated).

Its subcellular location is the endoplasmic reticulum membrane. It localises to the cytoplasmic vesicle. The protein resides in the autophagosome. It is found in the cytoplasm. The protein localises to the cytosol. Its subcellular location is the nucleus. It localises to the chromosome. In terms of biological role, major reticulophagy (also called ER-phagy) receptor that acts independently of other candidate reticulophagy receptors to remodel subdomains of the endoplasmic reticulum into autophagosomes upon nutrient stress, which then fuse with lysosomes for endoplasmic reticulum turnover. The ATG8-containing isolation membrane (IM) cradles a tubular segment of TEX264-positive ER near a three-way junction, allowing the formation of a synapse of 2 juxtaposed membranes with trans interaction between the TEX264 and ATG8 proteins. Expansion of the IM would extend the capture of ER, possibly through a 'zipper-like' process involving continued trans TEX264-ATG8 interactions, until poorly understood mechanisms lead to the fission of relevant membranes and, ultimately, autophagosomal membrane closure. Also involved in the repair of covalent DNA-protein cross-links (DPCs) during DNA synthesis: acts by bridging VCP/p97 to covalent DNA-protein cross-links (DPCs) and initiating resolution of DPCs by SPRTN. The protein is Testis-expressed protein 264 of Homo sapiens (Human).